The primary structure comprises 189 residues: Large ribosomal subunit protein uL6 (189 aa).

Belongs to the universal ribosomal protein uL6 family. In terms of assembly, part of the 50S ribosomal subunit.

This protein binds to the 23S rRNA, and is important in its secondary structure. It is located near the subunit interface in the base of the L7/L12 stalk, and near the tRNA binding site of the peptidyltransferase center. This is Large ribosomal subunit protein uL6 from Microcystis aeruginosa (strain NIES-843 / IAM M-2473).